The sequence spans 286 residues: Polyamine aminopropyltransferase (286 aa).

Residues 5–238 form the PABS domain; that stretch reads TMWHETLHDQ…GIMTFAWATD (234 aa). An S-methyl-5'-thioadenosine-binding site is contributed by Gln33. Spermidine-binding residues include His64 and Asp88. Residues Glu108 and 140–141 each bind S-methyl-5'-thioadenosine; that span reads DG. The active-site Proton acceptor is Asp158. Residue 158 to 161 coordinates spermidine; it reads DCTD. Residue Pro165 coordinates S-methyl-5'-thioadenosine.

The protein belongs to the spermidine/spermine synthase family. As to quaternary structure, homodimer or homotetramer.

It is found in the cytoplasm. The catalysed reaction is S-adenosyl 3-(methylsulfanyl)propylamine + putrescine = S-methyl-5'-thioadenosine + spermidine + H(+). It participates in amine and polyamine biosynthesis; spermidine biosynthesis; spermidine from putrescine: step 1/1. Functionally, catalyzes the irreversible transfer of a propylamine group from the amino donor S-adenosylmethioninamine (decarboxy-AdoMet) to putrescine (1,4-diaminobutane) to yield spermidine. The polypeptide is Polyamine aminopropyltransferase (Salmonella schwarzengrund (strain CVM19633)).